The chain runs to 297 residues: Formylmethanofuran--tetrahydromethanopterin formyltransferase (297 aa).

It belongs to the FTR family. As to quaternary structure, homotetramer.

The protein localises to the cytoplasm. The catalysed reaction is N-formylmethanofuran + 5,6,7,8-tetrahydromethanopterin + H(+) = N(5)-formyl-5,6,7,8-tetrahydromethanopterin + methanofuran. It participates in metabolic intermediate metabolism; lactate oxidation. In terms of biological role, catalyzes the transfer of a formyl group from 5-formyl tetrahydromethanopterin (5-formyl-H(4)MPT) to methanofuran (MFR) to produce formylmethanofuran (formyl-MFR) and tetrahydromethanopterin (H(4)MPT). The polypeptide is Formylmethanofuran--tetrahydromethanopterin formyltransferase (Archaeoglobus fulgidus (strain ATCC 49558 / DSM 4304 / JCM 9628 / NBRC 100126 / VC-16)).